The sequence spans 134 residues: DNA-binding protein H-NS homolog (134 aa).

A disordered region spans residues 106–134 (HKTWTGQGRTPRPIQNALNKGKSLSDFEI). The DNA-binding element occupies 112–117 (QGRTPR).

This sequence belongs to the histone-like protein H-NS family. In terms of assembly, homodimer that oligomerizes on DNA into higher-order complexes that form bridges between disparate regions of DNA compacting it.

The protein localises to the cytoplasm. It localises to the nucleoid. A DNA-binding protein implicated in transcriptional repression and chromosome organization and compaction. Binds nucleation sites in AT-rich DNA and bridges them, forming higher-order nucleoprotein complexes and condensing the chromosome. As many horizontally transferred genes are AT-rich, it plays a central role in silencing foreign genes. A subset of genes are repressed by H-NS in association with other proteins. This is DNA-binding protein H-NS homolog (hns) from Haemophilus influenzae (strain ATCC 51907 / DSM 11121 / KW20 / Rd).